The sequence spans 153 residues: SsrA-binding protein (153 aa).

The segment covering 132–142 (ALKRKEAEREA) has biased composition (basic and acidic residues). Positions 132-153 (ALKRKEAEREAQSAMKRYAKGY) are disordered.

Belongs to the SmpB family.

Its subcellular location is the cytoplasm. Its function is as follows. Required for rescue of stalled ribosomes mediated by trans-translation. Binds to transfer-messenger RNA (tmRNA), required for stable association of tmRNA with ribosomes. tmRNA and SmpB together mimic tRNA shape, replacing the anticodon stem-loop with SmpB. tmRNA is encoded by the ssrA gene; the 2 termini fold to resemble tRNA(Ala) and it encodes a 'tag peptide', a short internal open reading frame. During trans-translation Ala-aminoacylated tmRNA acts like a tRNA, entering the A-site of stalled ribosomes, displacing the stalled mRNA. The ribosome then switches to translate the ORF on the tmRNA; the nascent peptide is terminated with the 'tag peptide' encoded by the tmRNA and targeted for degradation. The ribosome is freed to recommence translation, which seems to be the essential function of trans-translation. In Campylobacter hominis (strain ATCC BAA-381 / DSM 21671 / CCUG 45161 / LMG 19568 / NCTC 13146 / CH001A), this protein is SsrA-binding protein.